The sequence spans 601 residues: Lanthanide-dependent methanol dehydrogenase (601 aa).

The first 21 residues, 1–21, serve as a signal peptide directing secretion; that stretch reads MRAVHLLALGAGLAAASPALA. A disulfide bond links Cys124 and Cys125. Residues Arg130, Thr174, Ser189, Gly190, and Gly191 each contribute to the pyrroloquinoline quinone site. Glu192 is a La(3+) binding site. Cys197 and Cys256 are oxidised to a cystine. Trp258 contacts pyrroloquinoline quinone. La(3+) is bound by residues Asn276, Asp318, and Asp320. Asp318 functions as the Proton acceptor in the catalytic mechanism. Arg345 lines the pyrroloquinoline quinone pocket. Cys408 and Cys437 form a disulfide bridge. Residues Trp494 and Trp558 each coordinate pyrroloquinoline quinone.

This sequence belongs to the bacterial PQQ dehydrogenase family. As to quaternary structure, homodimer. La(3+) is required as a cofactor. It depends on Nd(3+) as a cofactor. Pyrroloquinoline quinone serves as cofactor.

The protein localises to the periplasm. It catalyses the reaction 2 Fe(III)-[cytochrome cL] + methanol = 2 Fe(II)-[cytochrome cL] + formaldehyde + 2 H(+). In terms of biological role, catalyzes the oxidation of methanol to formaldehyde, but only in the presence of lanthanides (Ln). Contributes to methanol metabolism when La(3+) is present in the natural environment of the bacterium, allowing bacterial growth with methanol as carbon and energy source. Thereby is an essential enzyme for Ln-dependent methylotrophy. Uses a specific cytochrome cL (XoxG), encoded by the adjacent gene in the locus, as electron acceptor. Also plays a role in the transcriptional regulation of the mxa and xox1 operons, most likely acting as a lanthanide sensory module. Is also able to oxidize formaldehyde to formate in vitro, but this activity does not occur in vivo. The protein is Lanthanide-dependent methanol dehydrogenase of Methylorubrum extorquens (strain ATCC 14718 / DSM 1338 / JCM 2805 / NCIMB 9133 / AM1) (Methylobacterium extorquens).